A 126-amino-acid chain; its full sequence is Protein ApaG (126 aa).

The ApaG domain maps to 2–126; sequence NQLAASVSVD…FRLSIPGLLH (125 aa).

This chain is Protein ApaG, found in Shewanella pealeana (strain ATCC 700345 / ANG-SQ1).